We begin with the raw amino-acid sequence, 414 residues long: Carbohydrate sulfotransferase 12 (414 aa).

Over 1–5 (MTKAR) the chain is Cytoplasmic. A helical; Signal-anchor for type II membrane protein transmembrane segment spans residues 6-26 (LFRLWLVLGSVFMILLIIVYW). The Lumenal segment spans residues 27-414 (DSAGAAHFYL…YPKPENLLRD (388 aa)). The tract at residues 80–125 (QSDLPRKETEQPPAPGSMEESVRGYDWSPRDARRSPDQGRQQAERR) is disordered. Positions 99 to 125 (ESVRGYDWSPRDARRSPDQGRQQAERR) are enriched in basic and acidic residues. Residue Asn134 is glycosylated (N-linked (GlcNAc...) asparagine). 171 to 177 (PKVACTN) provides a ligand contact to 3'-phosphoadenylyl sulfate. A glycan (N-linked (GlcNAc...) asparagine) is linked at Asn209. 245–253 (RDPFVRLIS) is a 3'-phosphoadenylyl sulfate binding site. 2 N-linked (GlcNAc...) asparagine glycosylation sites follow: Asn280 and Asn370.

It belongs to the sulfotransferase 2 family. As to expression, widely expressed. Expressed a high level in spinal chord, heart, spleen, thyroid, pituitary gland, adrenal gland, peripheral blood leukocytes, thymus, lung, small intestine, fetal kidney, fetal spleen and fetal lung.

Its subcellular location is the golgi apparatus membrane. The catalysed reaction is chondroitin beta-D-glucuronate + n 3'-phosphoadenylyl sulfate = chondroitin 4'-sulfate + n adenosine 3',5'-bisphosphate + n H(+). In terms of biological role, catalyzes the transfer of sulfate to position 4 of the N-acetylgalactosamine (GalNAc) residue of chondroitin and desulfated dermatan sulfate. Chondroitin sulfate constitutes the predominant proteoglycan present in cartilage and is distributed on the surfaces of many cells and extracellular matrices. Activity toward partially desulfated dermatan sulfate is however lower. Does not form 4, 6-di-O-sulfated GalNAc when chondroitin sulfate C is used as an acceptor. In Homo sapiens (Human), this protein is Carbohydrate sulfotransferase 12 (CHST12).